The primary structure comprises 652 residues: Probable protein phosphatase 2C 19 (652 aa).

The PPM-type phosphatase domain maps to K265–F517. 4 residues coordinate Mn(2+): D300, G301, E467, and D508. The segment at A524 to E567 is disordered.

This sequence belongs to the PP2C family. Mg(2+) serves as cofactor. Mn(2+) is required as a cofactor.

The enzyme catalyses O-phospho-L-seryl-[protein] + H2O = L-seryl-[protein] + phosphate. It catalyses the reaction O-phospho-L-threonyl-[protein] + H2O = L-threonyl-[protein] + phosphate. This is Probable protein phosphatase 2C 19 from Oryza sativa subsp. japonica (Rice).